A 127-amino-acid polypeptide reads, in one-letter code: Small ribosomal subunit protein uS11 (127 aa).

Belongs to the universal ribosomal protein uS11 family. In terms of assembly, part of the 30S ribosomal subunit. Interacts with proteins S7 and S18. Binds to IF-3.

Functionally, located on the platform of the 30S subunit, it bridges several disparate RNA helices of the 16S rRNA. Forms part of the Shine-Dalgarno cleft in the 70S ribosome. The chain is Small ribosomal subunit protein uS11 from Streptococcus gordonii (strain Challis / ATCC 35105 / BCRC 15272 / CH1 / DL1 / V288).